An 826-amino-acid chain; its full sequence is Ubiquitin carboxyl-terminal hydrolase 16 (826 aa).

Residues 22–142 form a UBP-type zinc finger; that stretch reads PMCRHIRKGL…QVVDYVRKQA (121 aa). 12 residues coordinate Zn(2+): cysteine 24, histidine 26, cysteine 48, cysteine 51, cysteine 74, cysteine 77, cysteine 82, histidine 90, histidine 94, histidine 103, cysteine 116, and cysteine 119. Residue lysine 140 forms a Glycyl lysine isopeptide (Lys-Gly) (interchain with G-Cter in SUMO2) linkage. A disordered region spans residues 146-190; the sequence is TPKPAEKDNGNIELENKKLEKESKNEQEREKKENMAKENPPMNSP. Residues 149 to 181 show a composition bias toward basic and acidic residues; that stretch reads PAEKDNGNIELENKKLEKESKNEQEREKKENMA. Serine 189 is modified (phosphoserine). The USP domain occupies 196 to 825; the sequence is KGLSNLGNTC…QAYLLFYERI (630 aa). The active-site Nucleophile is the cysteine 205. Basic and acidic residues predominate over residues 394-408; that stretch reads SGKKSVNDKNLKKTM. Residues 394–460 form a disordered region; sequence SGKKSVNDKN…AKNQRRQQKI (67 aa). Over residues 409-420 the composition is skewed to acidic residues; it reads EDEDQDSEEEKD. A Phosphoserine modification is found at serine 415. The segment covering 421 to 430 has biased composition (basic and acidic residues); that stretch reads NDSYIKERSD. Over residues 438–458 the composition is skewed to basic residues; that stretch reads HLQKKAKKQAKKQAKNQRRQQ. Serine 552 carries the post-translational modification Phosphoserine. Position 557 is a phosphothreonine (threonine 557). Histidine 761 (proton acceptor) is an active-site residue.

This sequence belongs to the peptidase C19 family. USP16 subfamily. As to quaternary structure, homotetramer. Associates with late pre-40S ribosomes. Interacts with CEP78; promoting deubiquitination of tektins. Post-translationally, phosphorylated at the onset of mitosis and dephosphorylated during the metaphase/anaphase transition. Phosphorylation by AURKB enhances the deubiquitinase activity.

The protein localises to the nucleus. It carries out the reaction Thiol-dependent hydrolysis of ester, thioester, amide, peptide and isopeptide bonds formed by the C-terminal Gly of ubiquitin (a 76-residue protein attached to proteins as an intracellular targeting signal).. Functionally, specifically deubiquitinates 'Lys-120' of histone H2A (H2AK119Ub), a specific tag for epigenetic transcriptional repression, thereby acting as a coactivator. Deubiquitination of histone H2A is a prerequisite for subsequent phosphorylation at 'Ser-11' of histone H3 (H3S10ph), and is required for chromosome segregation when cells enter into mitosis. In resting B- and T-lymphocytes, phosphorylation by AURKB leads to enhance its activity, thereby maintaining transcription in resting lymphocytes. Regulates Hox gene expression via histone H2A deubiquitination. Prefers nucleosomal substrates. Does not deubiquitinate histone H2B. Also deubiquitinates non-histone proteins, such as ribosomal protein RPS27A: deubiquitination of monoubiquitinated RPS27A promotes maturation of the 40S ribosomal subunit. Also mediates deubiquitination of tektin proteins (TEKT1, TEKT2, TEK3, TEKT4 and TEKT5), promoting their stability. The sequence is that of Ubiquitin carboxyl-terminal hydrolase 16 from Macaca fascicularis (Crab-eating macaque).